Consider the following 185-residue polypeptide: Ribosome-recycling factor (185 aa).

This sequence belongs to the RRF family.

Its subcellular location is the cytoplasm. Its function is as follows. Responsible for the release of ribosomes from messenger RNA at the termination of protein biosynthesis. May increase the efficiency of translation by recycling ribosomes from one round of translation to another. The sequence is that of Ribosome-recycling factor from Shewanella amazonensis (strain ATCC BAA-1098 / SB2B).